The following is a 742-amino-acid chain: Phosphoribosylformylglycinamidine synthase subunit PurL (742 aa).

Residue His-54 is part of the active site. ATP-binding residues include Tyr-57 and Lys-96. Glu-98 provides a ligand contact to Mg(2+). Substrate contacts are provided by residues 99–102 (SHNH) and Arg-121. The active-site Proton acceptor is His-100. Residue Asp-122 participates in Mg(2+) binding. Gln-245 contacts substrate. Asp-273 serves as a coordination point for Mg(2+). Substrate is bound at residue 317–319 (ESQ). Residues Asp-500 and Gly-537 each coordinate ATP. Asn-538 provides a ligand contact to Mg(2+). Ser-540 provides a ligand contact to substrate.

The protein belongs to the FGAMS family. In terms of assembly, monomer. Part of the FGAM synthase complex composed of 1 PurL, 1 PurQ and 2 PurS subunits.

The protein localises to the cytoplasm. It catalyses the reaction N(2)-formyl-N(1)-(5-phospho-beta-D-ribosyl)glycinamide + L-glutamine + ATP + H2O = 2-formamido-N(1)-(5-O-phospho-beta-D-ribosyl)acetamidine + L-glutamate + ADP + phosphate + H(+). Its pathway is purine metabolism; IMP biosynthesis via de novo pathway; 5-amino-1-(5-phospho-D-ribosyl)imidazole from N(2)-formyl-N(1)-(5-phospho-D-ribosyl)glycinamide: step 1/2. Functionally, part of the phosphoribosylformylglycinamidine synthase complex involved in the purines biosynthetic pathway. Catalyzes the ATP-dependent conversion of formylglycinamide ribonucleotide (FGAR) and glutamine to yield formylglycinamidine ribonucleotide (FGAM) and glutamate. The FGAM synthase complex is composed of three subunits. PurQ produces an ammonia molecule by converting glutamine to glutamate. PurL transfers the ammonia molecule to FGAR to form FGAM in an ATP-dependent manner. PurS interacts with PurQ and PurL and is thought to assist in the transfer of the ammonia molecule from PurQ to PurL. In Geobacillus kaustophilus (strain HTA426), this protein is Phosphoribosylformylglycinamidine synthase subunit PurL.